The primary structure comprises 90 residues: MSRTIYCTFLKREAEGQDFQFYPGELGKRIYDNISKEAWTQWQTKQTMLINEKKISMMNVADRKVLEQEMINFLFEGQDVHIQGYTPPSE.

The protein belongs to the Fe(2+)-trafficking protein family. As to quaternary structure, monomer.

Functionally, could be a mediator in iron transactions between iron acquisition and iron-requiring processes, such as synthesis and/or repair of Fe-S clusters in biosynthetic enzymes. This chain is Probable Fe(2+)-trafficking protein, found in Sodalis glossinidius (strain morsitans).